A 123-amino-acid chain; its full sequence is Modulator protein MzrA (123 aa).

The Cytoplasmic portion of the chain corresponds to 1–8 (MIKRPRWQ). A helical membrane pass occupies residues 9 to 29 (YVLLIALALLALATLLVPCMV). The Periplasmic segment spans residues 30–123 (RTESELRIRA…EFARAPLNLG (94 aa)).

It belongs to the MzrA family. As to quaternary structure, interacts with EnvZ.

The protein localises to the cell inner membrane. In terms of biological role, modulates the activity of the EnvZ/OmpR two-component regulatory system, probably by directly modulating EnvZ enzymatic activity and increasing stability of phosphorylated OmpR. This Serratia proteamaculans (strain 568) protein is Modulator protein MzrA.